The following is a 279-amino-acid chain: Fructose-1,6-bisphosphatase class 1 (279 aa).

The Mg(2+) site is built by glutamate 65, aspartate 85, leucine 87, and aspartate 88. Substrate-binding positions include 88-91, tyrosine 190, and lysine 221; that span reads DGSS. Glutamate 227 contributes to the Mg(2+) binding site.

Belongs to the FBPase class 1 family. In terms of assembly, homotetramer. Requires Mg(2+) as cofactor.

The protein resides in the cytoplasm. It catalyses the reaction beta-D-fructose 1,6-bisphosphate + H2O = beta-D-fructose 6-phosphate + phosphate. Its pathway is carbohydrate biosynthesis; gluconeogenesis. This is Fructose-1,6-bisphosphatase class 1 from Helicobacter hepaticus (strain ATCC 51449 / 3B1).